Reading from the N-terminus, the 134-residue chain is Profilin-2 (134 aa).

A disulfide bridge links Cys-13 with Cys-118. The short motif at Ala-84 to Thr-100 is the Involved in PIP2 interaction element. At Thr-114 the chain carries Phosphothreonine.

The protein belongs to the profilin family. As to quaternary structure, occurs in many kinds of cells as a complex with monomeric actin in a 1:1 ratio. Phosphorylated by MAP kinases.

The protein localises to the cytoplasm. Its subcellular location is the cytoskeleton. Its function is as follows. Binds to actin and affects the structure of the cytoskeleton. At high concentrations, profilin prevents the polymerization of actin, whereas it enhances it at low concentrations. This chain is Profilin-2, found in Olea europaea (Common olive).